The sequence spans 600 residues: Epidermal growth factor receptor kinase substrate 8-like protein 3 (600 aa).

The region spanning 28–155 (QHRVEHLMTC…ALEEELEERP (128 aa)) is the PTB domain. 2 disordered regions span residues 152–245 (EERP…PERD) and 429–452 (LHFP…PLSS). The segment covering 204–214 (SERSISPSSRS) has biased composition (low complexity). S238 is modified (phosphoserine). The 60-residue stretch at 457–516 (RAALKMQVLYEFEARNAQELTVAQGEILEVLDQSKRWWLVKNEAGLTGYIPSNILEPLPA) folds into the SH3 domain.

This sequence belongs to the EPS8 family. As to quaternary structure, interacts with ABI1. Part of a complex that contains SOS1, ABI1 and EPS8L2. Interacts with FASLG. Detected in embryonic gut. Detected in adult testis, placenta, adrenal gland and intestine.

It is found in the cytoplasm. The polypeptide is Epidermal growth factor receptor kinase substrate 8-like protein 3 (Eps8l3) (Mus musculus (Mouse)).